Here is a 476-residue protein sequence, read N- to C-terminus: Endonuclease SceI small subunit (476 aa).

Belongs to the LAGLIDADG endonuclease family. In terms of assembly, endonuclease SceI (Endo.SceI) is a heterodimer of ENS2 and SSC1. The N-terminus is blocked.

The protein localises to the mitochondrion. Catalytic component of endonuclease SceI (Endo.SceI), which cleaves specifically at multiple sites on mitochondrial DNA and produces double-stranded breaks. This chain is Endonuclease SceI small subunit (ENS2), found in Saccharomyces cerevisiae (Baker's yeast).